The following is a 303-amino-acid chain: Protein REVEILLE 5 (303 aa).

An HTH myb-type domain is found at 54–108 (TIKKSRENWTDQEHDKFLEALHLFDRDWKKIEAFVGSKTVVQIRSHAQKYFLKVQ). Positions 81–104 (WKKIEAFVGSKTVVQIRSHAQKYF) form a DNA-binding region, H-T-H motif. The disordered stretch occupies residues 109–130 (KSGANEHLPPPRPKRKASHPYP).

The protein localises to the nucleus. In terms of biological role, probable transcription factor. The protein is Protein REVEILLE 5 (RVE5) of Arabidopsis thaliana (Mouse-ear cress).